The primary structure comprises 142 residues: Holo-[acyl-carrier-protein] synthase (142 aa).

Mg(2+)-binding residues include Asp-8 and Glu-57.

It belongs to the P-Pant transferase superfamily. AcpS family. The cofactor is Mg(2+).

Its subcellular location is the cytoplasm. The enzyme catalyses apo-[ACP] + CoA = holo-[ACP] + adenosine 3',5'-bisphosphate + H(+). Its function is as follows. Transfers the 4'-phosphopantetheine moiety from coenzyme A to a Ser of acyl-carrier-protein. The sequence is that of Holo-[acyl-carrier-protein] synthase from Ruegeria sp. (strain TM1040) (Silicibacter sp.).